The primary structure comprises 352 residues: UDP-3-O-acylglucosamine N-acyltransferase (352 aa).

Catalysis depends on histidine 244, which acts as the Proton acceptor.

It belongs to the transferase hexapeptide repeat family. LpxD subfamily. Homotrimer.

The enzyme catalyses a UDP-3-O-[(3R)-3-hydroxyacyl]-alpha-D-glucosamine + a (3R)-hydroxyacyl-[ACP] = a UDP-2-N,3-O-bis[(3R)-3-hydroxyacyl]-alpha-D-glucosamine + holo-[ACP] + H(+). The protein operates within bacterial outer membrane biogenesis; LPS lipid A biosynthesis. Its function is as follows. Catalyzes the N-acylation of UDP-3-O-acylglucosamine using 3-hydroxyacyl-ACP as the acyl donor. Is involved in the biosynthesis of lipid A, a phosphorylated glycolipid that anchors the lipopolysaccharide to the outer membrane of the cell. The chain is UDP-3-O-acylglucosamine N-acyltransferase from Leptospira biflexa serovar Patoc (strain Patoc 1 / Ames).